We begin with the raw amino-acid sequence, 1534 residues long: ABC transporter G family member 6 (1534 aa).

Basic and acidic residues predominate over residues 1 to 11 (MAKQDPKDKNS). Residues 1–85 (MAKQDPKDKN…ESNYDSDDEK (85 aa)) are disordered. Residues 21–65 (NNNNNENLDNDQELLNNNNNNNNNNNNNNNNNNNNNNNNNNNNNL) show a composition bias toward low complexity. An ABC transporter 1 domain is found at 138–385 (VYCRNATYTV…FKKLGFACPS (248 aa)). 177-184 (GTPGCGKS) contacts ATP. The ABC transmembrane type-2 1 domain maps to 481–757 (RRNYYNFLTR…VVCFFALKYF (277 aa)). A run of 7 helical transmembrane segments spans residues 486–506 (NFLTRVAKGIFFGLLLGTLYW), 521–541 (LLFFIMVTIIFSSFAAVNSFF), 566–586 (IICDIPAGILEVAFFGPIVYW), 592–612 (PVFIRFVYFMLLLIMTDNLSL), 625–645 (IEIANVIASVILSIWLLFSGF), 652–672 (IGGWWIWLYYISPYTWIFQGL), and 734–754 (VVFGILSAYIVFFYVVCFFAL). The tract at residues 781–907 (KQDEESAAIS…KSKNGKDIGS (127 aa)) is disordered. Over residues 797–808 (IDDDNDDDADYE) the composition is skewed to acidic residues. Residues 830–841 (SPSSLTTGSPYY) show a composition bias toward polar residues. Low complexity predominate over residues 842 to 856 (NINNNNNNLSGSGNN). The segment covering 864–873 (TPSNLSPSVN) has biased composition (polar residues). Residues 874–896 (SPITINSPMPTSPSNNNNNNNSN) show a composition bias toward low complexity. Over residues 897-906 (EKSKNGKDIG) the composition is skewed to basic and acidic residues. Residues 924-1166 (VKVDDPDNPK…VILDYCDKLG (243 aa)) form the ABC transporter 2 domain. 960–967 (GPSGAGKS) lines the ATP pocket. An ABC transmembrane type-2 2 domain is found at 1256–1529 (LRRPAIFVSN…GLSFWGFKKI (274 aa)). The next 6 membrane-spanning stretches (helical) occupy residues 1261–1281 (IFVSNCIRSILLAVLLGTLFV), 1296–1316 (LLFFSFLFAGMVAIGNIPTTV), 1345–1365 (YPFTLSTGILYIIPTFWIAGL), 1377–1397 (CLFIFIITYVMYDAFGLCLAV), 1404–1424 (MASTICGIGLSLSTLFGGFVI), and 1506–1526 (IDIAAIFGYIFIFVGLSFWGF).

It belongs to the ABC transporter superfamily. ABCG family. PDR (TC 3.A.1.205) subfamily.

Its subcellular location is the membrane. The protein is ABC transporter G family member 6 (abcG6) of Dictyostelium discoideum (Social amoeba).